We begin with the raw amino-acid sequence, 96 residues long: MRAYEVVYVLTPDLEEEQVEEKHNEFKSVIERYGGAPGEIDVWGKRRLAYEIDDYQEGIYALRKFQGENQVLTELERSLKMDESILRYLIARDEDA.

This sequence belongs to the bacterial ribosomal protein bS6 family.

Binds together with bS18 to 16S ribosomal RNA. This is Small ribosomal subunit protein bS6 from Natranaerobius thermophilus (strain ATCC BAA-1301 / DSM 18059 / JW/NM-WN-LF).